The following is a 382-amino-acid chain: Mannitol-1-phosphate 5-dehydrogenase (382 aa).

3–14 (ALHFGAGNIGRG) contributes to the NAD(+) binding site.

The protein belongs to the mannitol dehydrogenase family.

The enzyme catalyses D-mannitol 1-phosphate + NAD(+) = beta-D-fructose 6-phosphate + NADH + H(+). This chain is Mannitol-1-phosphate 5-dehydrogenase, found in Mannheimia succiniciproducens (strain KCTC 0769BP / MBEL55E).